A 192-amino-acid polypeptide reads, in one-letter code: Fe/S biogenesis protein NfuA (192 aa).

The [4Fe-4S] cluster site is built by Cys-150 and Cys-153.

This sequence belongs to the NfuA family. Homodimer. The cofactor is [4Fe-4S] cluster.

Its function is as follows. Involved in iron-sulfur cluster biogenesis. Binds a 4Fe-4S cluster, can transfer this cluster to apoproteins, and thereby intervenes in the maturation of Fe/S proteins. Could also act as a scaffold/chaperone for damaged Fe/S proteins. The polypeptide is Fe/S biogenesis protein NfuA (Buchnera aphidicola subsp. Acyrthosiphon pisum (strain 5A)).